The following is a 290-amino-acid chain: 4-hydroxy-tetrahydrodipicolinate synthase (290 aa).

Thr-42 is a binding site for pyruvate. Tyr-129 serves as the catalytic Proton donor/acceptor. The Schiff-base intermediate with substrate role is filled by Lys-157. Pyruvate is bound at residue Ile-198.

The protein belongs to the DapA family. Homotetramer; dimer of dimers.

Its subcellular location is the cytoplasm. The catalysed reaction is L-aspartate 4-semialdehyde + pyruvate = (2S,4S)-4-hydroxy-2,3,4,5-tetrahydrodipicolinate + H2O + H(+). It functions in the pathway amino-acid biosynthesis; L-lysine biosynthesis via DAP pathway; (S)-tetrahydrodipicolinate from L-aspartate: step 3/4. Catalyzes the condensation of (S)-aspartate-beta-semialdehyde [(S)-ASA] and pyruvate to 4-hydroxy-tetrahydrodipicolinate (HTPA). This Chlamydia felis (strain Fe/C-56) (Chlamydophila felis) protein is 4-hydroxy-tetrahydrodipicolinate synthase.